We begin with the raw amino-acid sequence, 1865 residues long: Dedicator of cytokinesis protein 1 (1865 aa).

The 62-residue stretch at 9–70 folds into the SH3 domain; it reads REEKYGVAFY…PASYIHLKEA (62 aa). In terms of domain architecture, C2 DOCK-type spans 425–609; the sequence is RNDIYVTLVQ…DSFQISTLVC (185 aa). The region spanning 1207 to 1617 is the DOCKER domain; it reads YKEIEREEMY…VEKQYGVRTM (411 aa). Residues 1613-1723 are disordered; that stretch reads GVRTMPSGLD…FKPADSSLQQ (111 aa). Positions 1639–1664 are enriched in low complexity; it reads PSSSRPLSVASVSSFSSDSTPSRPGS. Positions 1680–1694 are enriched in basic and acidic residues; sequence RSQDKLDKDDPDKEK. Ser-1681 carries the post-translational modification Phosphoserine. A phosphoinositide-binding region spans residues 1687 to 1695; it reads KDDPDKEKK. Positions 1695–1704 are enriched in basic residues; sequence KDKKKEKRNS. Positions 1705 to 1716 are enriched in basic and acidic residues; the sequence is KHQEIFDKEFKP. Phosphoserine occurs at positions 1743, 1756, 1761, and 1764. Disordered stretches follow at residues 1753 to 1778 and 1801 to 1865; these read RRFS…AKLS and PLPL…GIVQ. Over residues 1756–1766 the composition is skewed to low complexity; the sequence is SVSPASPSSQQ. Phosphothreonine is present on residues Thr-1767 and Thr-1772. The interaction with NCK2 second and third SH3 domain (minor) stretch occupies residues 1793–1819; that stretch reads MDVADVPPPLPLKGNMADYGNLMENQD. Positions 1799–1805 match the SH3-binding; interaction with CRK motif; sequence PPPLPLK. The interval 1820–1836 is interaction with NCK2 third SH3 domain (major); the sequence is MMVSPTSPPPPPPQRQQ. Positions 1825–1851 are enriched in pro residues; the sequence is TSPPPPPPQRQQPPPLPSKTPPPPPPK. Residues 1837-1852 form an interaction with NCK2 (minor) region; the sequence is PPPLPSKTPPPPPPKT. The SH3-binding; interaction with CRK signature appears at 1838 to 1843; that stretch reads PPLPSK. Ser-1858 bears the Phosphoserine mark.

The protein belongs to the DOCK family. Interacts with the SH3 domains of CRK and NCK2 via multiple sites. Interacts with nucleotide-free RAC1 via its DOCKER domain. Interacts with ELMO1, ELMO2 and probably ELMO3 via its SH3 domain. Interacts with RAC1. Interacts with ELMO1 and ADGRB1. Identified in a complex with AUTS2 and ELMO2.

It is found in the cytoplasm. Its subcellular location is the membrane. In terms of biological role, involved in cytoskeletal rearrangements required for phagocytosis of apoptotic cells and cell motility. Along with DOCK1, mediates CRK/CRKL regulation of epithelial and endothelial cell spreading and migration on type IV collagen. Functions as a guanine nucleotide exchange factor (GEF), which activates Rac Rho small GTPases by exchanging bound GDP for free GTP. Its GEF activity may be enhanced by ELMO1. The chain is Dedicator of cytokinesis protein 1 (Dock1) from Mus musculus (Mouse).